The chain runs to 131 residues: uncharacterized protein (131 aa).

The tract at residues 60–100 is disordered; that stretch reads GRHTLSQVPNKGHEKASAVQLPEKQGTDQSRRGPTSAVTKA. The span at 91-100 shows a compositional bias: polar residues; that stretch reads RGPTSAVTKA.

This is an uncharacterized protein from Homo sapiens (Human).